The following is a 594-amino-acid chain: TOX high mobility group box family member 4-B (594 aa).

2 disordered regions span residues 160–225 and 522–545; these read GTIL…PQKP and ESPP…SPQC. Residues 207-217 show a composition bias toward basic residues; the sequence is KPKTPKKKKKK. The Nuclear localization signal signature appears at 212–217; the sequence is KKKKKK. Residues 222–290 constitute a DNA-binding region (HMG box); it reads PQKPLSAYAL…EYLKALALYK (69 aa).

As to quaternary structure, component of the PNUTS-PP1 phosphatase complex.

The protein localises to the nucleus. The protein resides in the chromosome. In terms of biological role, transcription factor that modulates cell fate reprogramming from the somatic state to the pluripotent and neuronal fate. Also acts as a regulatory component of protein phosphatase 1 (PP1) complexes. Component of the PNUTS-PP1 protein phosphatase complex, a PP1 complex that regulates RNA polymerase II transcription pause-release. PNUTS-PP1 also plays a role in the control of chromatin structure and cell cycle progression during the transition from mitosis into interphase. This chain is TOX high mobility group box family member 4-B (tox4-b), found in Xenopus laevis (African clawed frog).